Reading from the N-terminus, the 288-residue chain is Acetyl-coenzyme A carboxylase carboxyl transferase subunit beta (288 aa).

The CoA carboxyltransferase N-terminal domain occupies leucine 33–arginine 288. Zn(2+) is bound by residues cysteine 37, cysteine 40, cysteine 55, and cysteine 58. The C4-type zinc-finger motif lies at cysteine 37–cysteine 58.

Belongs to the AccD/PCCB family. Acetyl-CoA carboxylase is a heterohexamer composed of biotin carboxyl carrier protein (AccB), biotin carboxylase (AccC) and two subunits each of ACCase subunit alpha (AccA) and ACCase subunit beta (AccD). The cofactor is Zn(2+).

The protein localises to the cytoplasm. The enzyme catalyses N(6)-carboxybiotinyl-L-lysyl-[protein] + acetyl-CoA = N(6)-biotinyl-L-lysyl-[protein] + malonyl-CoA. The protein operates within lipid metabolism; malonyl-CoA biosynthesis; malonyl-CoA from acetyl-CoA: step 1/1. Component of the acetyl coenzyme A carboxylase (ACC) complex. Biotin carboxylase (BC) catalyzes the carboxylation of biotin on its carrier protein (BCCP) and then the CO(2) group is transferred by the transcarboxylase to acetyl-CoA to form malonyl-CoA. This is Acetyl-coenzyme A carboxylase carboxyl transferase subunit beta from Streptococcus pneumoniae serotype 4 (strain ATCC BAA-334 / TIGR4).